Consider the following 412-residue polypeptide: Sulfhydrogenase 2 subunit alpha (412 aa).

Positions 60, 63, 402, and 405 each coordinate Ni(2+). Fe cation is bound at residue Cys63. Fe cation is bound at residue Cys405.

The protein belongs to the [NiFe]/[NiFeSe] hydrogenase large subunit family. As to quaternary structure, dimer of heterotetramer of alpha, beta, gamma and delta subunits. The nickel-containing alpha and delta subunits constitute the hydrogenase activity. The beta and gamma subunits (flavin-containing dimer) constitute the sulfur reductase activity. The cofactor is Ni(2+). Requires Fe cation as cofactor.

The protein resides in the cytoplasm. The enzyme catalyses H2 + NADP(+) = NADPH + H(+). It catalyses the reaction H2 + NAD(+) = NADH + H(+). In terms of biological role, part of a bifunctional enzyme complex that functions as a hydrogen-evolving hydrogenase with sulfur-reducing activity. May play a role in hydrogen cycling during fermentative growth. Activity exhibited with NAD in addition to NADPH. The alpha and delta subunits form the hydrogenase component that catalyzes the reduction of protons to evolve hydrogen. This is Sulfhydrogenase 2 subunit alpha from Pyrococcus furiosus (strain ATCC 43587 / DSM 3638 / JCM 8422 / Vc1).